A 345-amino-acid chain; its full sequence is Histidinol-phosphate aminotransferase (345 aa).

Lysine 206 is modified (N6-(pyridoxal phosphate)lysine).

It belongs to the class-II pyridoxal-phosphate-dependent aminotransferase family. Histidinol-phosphate aminotransferase subfamily. In terms of assembly, homodimer. Pyridoxal 5'-phosphate serves as cofactor.

The catalysed reaction is L-histidinol phosphate + 2-oxoglutarate = 3-(imidazol-4-yl)-2-oxopropyl phosphate + L-glutamate. It participates in amino-acid biosynthesis; L-histidine biosynthesis; L-histidine from 5-phospho-alpha-D-ribose 1-diphosphate: step 7/9. The chain is Histidinol-phosphate aminotransferase from Bacteroides fragilis (strain ATCC 25285 / DSM 2151 / CCUG 4856 / JCM 11019 / LMG 10263 / NCTC 9343 / Onslow / VPI 2553 / EN-2).